A 291-amino-acid chain; its full sequence is MEMO1 family protein PYRAB05390 (291 aa).

The protein belongs to the MEMO1 family.

The chain is MEMO1 family protein PYRAB05390 from Pyrococcus abyssi (strain GE5 / Orsay).